The primary structure comprises 217 residues: Small ribosomal subunit protein uS3 (217 aa).

Residues 38–106 enclose the KH type-2 domain; that stretch reads IRKFIQKELA…QVHINIVEIK (69 aa).

It belongs to the universal ribosomal protein uS3 family. As to quaternary structure, part of the 30S ribosomal subunit. Forms a tight complex with proteins S10 and S14.

Binds the lower part of the 30S subunit head. Binds mRNA in the 70S ribosome, positioning it for translation. The protein is Small ribosomal subunit protein uS3 of Streptococcus thermophilus (strain CNRZ 1066).